Here is a 210-residue protein sequence, read N- to C-terminus: Helix-loop-helix protein 26 (210 aa).

Over residues 1-15 (MSSSPTSSSSGSPSS) the composition is skewed to low complexity. The interval 1 to 33 (MSSSPTSSSSGSPSSHGHRSETEKQRRDDTNDL) is disordered. The bHLH domain maps to 14–65 (SSHGHRSETEKQRRDDTNDLLNEFKKIVQKSESEKLSKEEVLFRIVKLLSGI). The span at 18–33 (HRSETEKQRRDDTNDL) shows a compositional bias: basic and acidic residues.

As to quaternary structure, homodimer; binds to DNA as a homodimer. As to expression, expressed in intestinal cells (at protein level).

The protein localises to the nucleus. As a homodimer binds DNA via the E-box sequence 5'-CACGTG-3'. Represses lag-2 transcription during embryogenesis via Notch signaling, in an unc-37-dependent manner. Also represses tbx-37 independent of Notch signaling. In the intestine, plays a role in probiotic-mediated protection against infections by pathogens such as S.enterica. This is most likely by positively regulating the expression of genes such as bar-1 upon exposure to probiotic bacteria such as the E.faecium. In Caenorhabditis elegans, this protein is Helix-loop-helix protein 26.